The chain runs to 265 residues: Ribosomal RNA small subunit methyltransferase A (265 aa).

6 residues coordinate S-adenosyl-L-methionine: N13, L15, G40, E61, D85, and N103.

It belongs to the class I-like SAM-binding methyltransferase superfamily. rRNA adenine N(6)-methyltransferase family. RsmA subfamily.

The protein localises to the cytoplasm. The enzyme catalyses adenosine(1518)/adenosine(1519) in 16S rRNA + 4 S-adenosyl-L-methionine = N(6)-dimethyladenosine(1518)/N(6)-dimethyladenosine(1519) in 16S rRNA + 4 S-adenosyl-L-homocysteine + 4 H(+). Specifically dimethylates two adjacent adenosines (A1518 and A1519) in the loop of a conserved hairpin near the 3'-end of 16S rRNA in the 30S particle. May play a critical role in biogenesis of 30S subunits. The polypeptide is Ribosomal RNA small subunit methyltransferase A (Aromatoleum aromaticum (strain DSM 19018 / LMG 30748 / EbN1) (Azoarcus sp. (strain EbN1))).